A 219-amino-acid polypeptide reads, in one-letter code: uncharacterized protein (219 aa).

An RRM domain is found at 30 to 107 (FRLFVGNLGN…RPVKLSRATS (78 aa)). Basic residues predominate over residues 140-149 (KKIKNKHGKN). Residues 140–219 (KKIKNKHGKN…YSRASSFRRV (80 aa)) are disordered. Positions 150–169 (SSKSSRAAQSAAAELISSSS) are enriched in low complexity. Residues 176–186 (ANSTSVPNAVN) show a composition bias toward polar residues.

This is an uncharacterized protein from Schizosaccharomyces pombe (strain 972 / ATCC 24843) (Fission yeast).